The following is a 92-amino-acid chain: Putative regulatory protein CTN_0877 (92 aa).

It belongs to the RemA family.

The protein is Putative regulatory protein CTN_0877 of Thermotoga neapolitana (strain ATCC 49049 / DSM 4359 / NBRC 107923 / NS-E).